The following is a 429-amino-acid chain: RNA-binding protein BRN2 (429 aa).

3 consecutive RRM domains span residues 12 to 93 (VKLF…YADG), 100 to 180 (HKLF…WADT), and 330 to 408 (ANLF…LKRD). Positions 410-429 (GQQQQQQQSKNPLFNGLLNS) are disordered. A compositionally biased stretch (polar residues) spans 418–429 (SKNPLFNGLLNS).

As to expression, expressed in roots, stems, flowers and siliques.

The protein localises to the cytoplasm. Its function is as follows. RNA-binding protein involved in the regulation of flowering time. Acts as a repressor of the activity of SOC1, a transcriptional activator of flowering time. Binds to the 3'-UTR of SOC1 mRNA in the cytoplasm and participates in SOC1 mRNA decay, mediated by the distal region of the SOC1 3'-UTR. The protein is RNA-binding protein BRN2 of Arabidopsis thaliana (Mouse-ear cress).